We begin with the raw amino-acid sequence, 188 residues long: Elongation factor P-like protein (188 aa).

It belongs to the elongation factor P family.

The chain is Elongation factor P-like protein from Aliivibrio fischeri (strain ATCC 700601 / ES114) (Vibrio fischeri).